The sequence spans 202 residues: Large ribosomal subunit protein uL18 (202 aa).

It belongs to the universal ribosomal protein uL18 family. As to quaternary structure, part of the 50S ribosomal subunit. Contacts the 5S and 23S rRNAs.

Functionally, this is one of the proteins that bind and probably mediate the attachment of the 5S RNA into the large ribosomal subunit, where it forms part of the central protuberance. This is Large ribosomal subunit protein uL18 from Methanopyrus kandleri (strain AV19 / DSM 6324 / JCM 9639 / NBRC 100938).